A 146-amino-acid polypeptide reads, in one-letter code: Hemoglobin subunit delta (146 aa).

The 145-residue stretch at 2-146 (HLTGDEKSAV…VATALAHKYH (145 aa)) folds into the Globin domain. Ser50 is subject to Phosphoserine. Heme b-binding residues include His63 and His92.

It belongs to the globin family. In terms of assembly, heterotetramer of two delta chains and two alpha chains. Red blood cells.

This Saimiri sciureus (Common squirrel monkey) protein is Hemoglobin subunit delta (HBD).